A 213-amino-acid chain; its full sequence is ATP phosphoribosyltransferase (213 aa).

It belongs to the ATP phosphoribosyltransferase family. Short subfamily. In terms of assembly, heteromultimer composed of HisG and HisZ subunits.

Its subcellular location is the cytoplasm. It catalyses the reaction 1-(5-phospho-beta-D-ribosyl)-ATP + diphosphate = 5-phospho-alpha-D-ribose 1-diphosphate + ATP. The protein operates within amino-acid biosynthesis; L-histidine biosynthesis; L-histidine from 5-phospho-alpha-D-ribose 1-diphosphate: step 1/9. In terms of biological role, catalyzes the condensation of ATP and 5-phosphoribose 1-diphosphate to form N'-(5'-phosphoribosyl)-ATP (PR-ATP). Has a crucial role in the pathway because the rate of histidine biosynthesis seems to be controlled primarily by regulation of HisG enzymatic activity. This Bacillus pumilus (strain SAFR-032) protein is ATP phosphoribosyltransferase.